The primary structure comprises 327 residues: Tryptophan--tRNA ligase (327 aa).

ATP contacts are provided by residues 9 to 11 (QPS) and 17 to 18 (GN). A 'HIGH' region motif is present at residues 10-18 (PSGDIHIGN). An L-tryptophan-binding site is contributed by aspartate 132. ATP contacts are provided by residues 144–146 (GED), isoleucine 183, and 192–196 (KMSKS). The short motif at 192 to 196 (KMSKS) is the 'KMSKS' region element.

This sequence belongs to the class-I aminoacyl-tRNA synthetase family. As to quaternary structure, homodimer.

The protein resides in the cytoplasm. The enzyme catalyses tRNA(Trp) + L-tryptophan + ATP = L-tryptophyl-tRNA(Trp) + AMP + diphosphate + H(+). Functionally, catalyzes the attachment of tryptophan to tRNA(Trp). This is Tryptophan--tRNA ligase from Caldanaerobacter subterraneus subsp. tengcongensis (strain DSM 15242 / JCM 11007 / NBRC 100824 / MB4) (Thermoanaerobacter tengcongensis).